The primary structure comprises 343 residues: Heat-inducible transcription repressor HrcA (343 aa).

The protein belongs to the HrcA family.

Its function is as follows. Negative regulator of class I heat shock genes (grpE-dnaK-dnaJ and groELS operons). Prevents heat-shock induction of these operons. This is Heat-inducible transcription repressor HrcA from Mycobacterium ulcerans (strain Agy99).